A 266-amino-acid polypeptide reads, in one-letter code: Electron transfer flavoprotein subunit beta (266 aa).

This sequence belongs to the ETF beta-subunit/FixA family. As to quaternary structure, heterodimer of an alpha and a beta subunit. It depends on FAD as a cofactor. Requires AMP as cofactor.

Functionally, the electron transfer flavoprotein serves as a specific electron acceptor for other dehydrogenases. It transfers the electrons to the main respiratory chain via ETF-ubiquinone oxidoreductase (ETF dehydrogenase). The sequence is that of Electron transfer flavoprotein subunit beta (etfB) from Mycobacterium leprae (strain TN).